Here is a 437-residue protein sequence, read N- to C-terminus: GTP-binding protein ERG (437 aa).

Over residues 39–50 the composition is skewed to polar residues; sequence QPNLDEPTSINE. A disordered region spans residues 39-65; the sequence is QPNLDEPTSINEDGSSSDSVFDSSQYP. A compositionally biased stretch (low complexity) spans 51 to 62; it reads DGSSSDSVFDSS. 2 positions are modified to phosphoserine: S111 and S112. The Era-type G domain occupies 152 to 333; the sequence is KSLNVGIIGP…LMDQAVKKPW (182 aa). The tract at residues 160–167 is G1; the sequence is GPPNAGKS. Residue 160–167 coordinates GTP; that stretch reads GPPNAGKS. The G2 stretch occupies residues 186 to 190; it reads NTTTH. Residues 207–210 are G3; the sequence is DTPG. Residues 207–211 and 279–282 each bind GTP; these read DTPGL and NKVD. The interval 279 to 282 is G4; sequence NKVD. The segment at 309-311 is G5; it reads ISG. One can recognise a KH type-2 domain in the interval 361-437; sequence VHQEIPYGLE…VHLILQVKLK (77 aa).

It belongs to the TRAFAC class TrmE-Era-EngA-EngB-Septin-like GTPase superfamily. Era GTPase family.

Its function is as follows. Has a crucial role in plant growth and development, possibly by influencing mitochondrial division. The polypeptide is GTP-binding protein ERG (ERG) (Arabidopsis thaliana (Mouse-ear cress)).